The sequence spans 1010 residues: Signal peptide, CUB and EGF-like domain-containing protein 2 (1010 aa).

Positions 1 to 24 (MGAVWTVRLLCLFLLLLNTRQSAA) are cleaved as a signal peptide. The region spanning 28-68 (NTDQCAEGSDACHIDAICQNTPTSYKCTCKTGFKGDGKHCE) is the EGF-like 1; calcium-binding domain. Disulfide bonds link Cys-32–Cys-45, Cys-39–Cys-54, Cys-56–Cys-67, Cys-73–Cys-85, Cys-81–Cys-94, Cys-96–Cys-109, Cys-115–Cys-126, and Cys-122–Cys-135. The 42-residue stretch at 69-110 (DIDECDVEYNGGCVHECNNIPGNYRCTCLDGFHLAHDGHNCL) folds into the EGF-like 2; calcium-binding domain. In terms of domain architecture, EGF-like 3; calcium-binding spans 111–147 (DVDECVFNNGGCQHVCVNTMGSYECRCKQGFFLSDNQ). EGF-like domains lie at 160 to 196 (CMNK…QRGC) and 200 to 235 (CNHG…GRTC). The N-linked (GlcNAc...) asparagine glycan is linked to Asn-249. In terms of domain architecture, EGF-like 6 spans 269–304 (CAVNNGGCDSTCKDTSTGVRCSCPVGFTLQPDGKSC). Residues 306–346 (DIDECELHNGGCDHYCRNTIGSFECSCRKGFKLLTDERSCQ) enclose the EGF-like 7; calcium-binding domain. 9 disulfides stabilise this stretch: Cys-310/Cys-321, Cys-317/Cys-330, Cys-332/Cys-345, Cys-351/Cys-361, Cys-357/Cys-370, Cys-372/Cys-384, Cys-390/Cys-401, Cys-397/Cys-410, and Cys-412/Cys-425. Residues 347–385 (DIDECFFERTCDHTCVNSPGSFQCVCNKGYTLYGLAHCG) enclose the EGF-like 8; calcium-binding domain. The EGF-like 9; calcium-binding domain maps to 386 to 426 (DINECSFNNGGCEHTCENTMGSFGCHCRAGYKLHWNKKDCI). 4 N-linked (GlcNAc...) asparagine glycosylation sites follow: Asn-488, Asn-703, Asn-774, and Asn-803. Cys-822 and Cys-848 are oxidised to a cystine. The CUB domain occupies 822-934 (CGGELGEFTG…KGFQVPYVTY (113 aa)). The interval 860–869 (ILVVVPEIYL) is interaction with the cholesterol-anchor of SHH. The cysteines at positions 875 and 896 are disulfide-linked. N-linked (GlcNAc...) asparagine glycosylation is present at Asn-982.

In terms of assembly, interacts with SHH via the cholesterol anchor of the dually lipid-modified SHH (ShhNp). Interacts with PTCH1. Forms homooligomers and heterooligomers with SCUBE1 and SCUBE3. Interacts with VEGFR2. Post-translationally, N-glycosylated.

The protein resides in the secreted. The protein localises to the cell surface. Functionally, lipid-binding protein required for SHH long-range signaling by binding to the dually lipid-modified SHH (ShhNp) and by promoting ShhNp mobilization, solubilization and release from the cell membrane. Acts by enhancing the proteolytic processing (shedding) of the lipid-modified N- and C- terminal of ShhNp at the cell surface. Synergizes with DISP1 to cause an increase in SHH secretion. Probable cell surface coreceptor for VEGFR2 involved in VEGFR2-mediated angiogenesis. This is Signal peptide, CUB and EGF-like domain-containing protein 2 (scube2) from Danio rerio (Zebrafish).